The following is a 62-amino-acid chain: Ubiquinol-cytochrome c reductase complex 6.7 kDa protein (62 aa).

Topologically, residues T2–D25 are mitochondrial matrix. Residues I26 to I44 form a helical membrane-spanning segment. The Mitochondrial intermembrane portion of the chain corresponds to Q45 to K62.

It belongs to the UQCR11/QCR10 family. Component of the ubiquinol-cytochrome c oxidoreductase (cytochrome b-c1 complex, complex III, CIII), a multisubunit enzyme composed of 3 respiratory subunits cytochrome b, cytochrome c1 and Rieske protein, 2 core protein subunits, and additional low-molecular weight protein subunits. The complex exists as an obligatory dimer and forms supercomplexes (SCs) in the inner mitochondrial membrane with cytochrome c oxidase (complex IV, CIV).

It is found in the mitochondrion inner membrane. Component of the ubiquinol-cytochrome c oxidoreductase, a multisubunit transmembrane complex that is part of the mitochondrial electron transport chain which drives oxidative phosphorylation. The respiratory chain contains 3 multisubunit complexes succinate dehydrogenase (complex II, CII), ubiquinol-cytochrome c oxidoreductase (cytochrome b-c1 complex, complex III, CIII) and cytochrome c oxidase (complex IV, CIV), that cooperate to transfer electrons derived from NADH and succinate to molecular oxygen, creating an electrochemical gradient over the inner membrane that drives transmembrane transport and the ATP synthase. The cytochrome b-c1 complex catalyzes electron transfer from ubiquinol to cytochrome c, linking this redox reaction to translocation of protons across the mitochondrial inner membrane, with protons being carried across the membrane as hydrogens on the quinol. In the process called Q cycle, 2 protons are consumed from the matrix, 4 protons are released into the intermembrane space and 2 electrons are passed to cytochrome c. QCR10 has a role in CIII assembly and RIP1 stability. This is Ubiquinol-cytochrome c reductase complex 6.7 kDa protein from Solanum tuberosum (Potato).